We begin with the raw amino-acid sequence, 198 residues long: 7-methyl-GTP pyrophosphatase (198 aa).

Aspartate 75 functions as the Proton acceptor in the catalytic mechanism.

The protein belongs to the Maf family. YceF subfamily. It depends on a divalent metal cation as a cofactor.

It is found in the cytoplasm. The catalysed reaction is N(7)-methyl-GTP + H2O = N(7)-methyl-GMP + diphosphate + H(+). Functionally, nucleoside triphosphate pyrophosphatase that hydrolyzes 7-methyl-GTP (m(7)GTP). May have a dual role in cell division arrest and in preventing the incorporation of modified nucleotides into cellular nucleic acids. The chain is 7-methyl-GTP pyrophosphatase from Bartonella quintana (strain Toulouse) (Rochalimaea quintana).